The sequence spans 155 residues: Plastocyanin, chloroplastic (155 aa).

Residues 1–58 (MAALSSAAVSVPSFAAATPMRSSRSSRMVVRASLGKKAASAAVAMAAGAMLLGGSAMA) constitute a chloroplast transit peptide. Residues 59-155 (QDVLLGANGG…AGMVGKVTVN (97 aa)) enclose the Plastocyanin-like domain. Cu cation-binding residues include H95, C140, H143, and M148.

It belongs to the plastocyanin family. It depends on Cu(2+) as a cofactor.

The protein localises to the plastid. The protein resides in the chloroplast thylakoid membrane. Participates in electron transfer between P700 and the cytochrome b6-f complex in photosystem I. This Hordeum vulgare (Barley) protein is Plastocyanin, chloroplastic (PETE).